The following is a 117-amino-acid chain: Nascent polypeptide-associated complex protein (117 aa).

The NAC-A/B domain occupies 9–77 (PKQLKQMQRA…ARECDLEAEV (69 aa)).

It belongs to the NAC-alpha family. Homodimer. Interacts with the ribosome. Binds ribosomal RNA.

Its function is as follows. Contacts the emerging nascent chain on the ribosome. The chain is Nascent polypeptide-associated complex protein from Methanothermobacter marburgensis (strain ATCC BAA-927 / DSM 2133 / JCM 14651 / NBRC 100331 / OCM 82 / Marburg) (Methanobacterium thermoautotrophicum).